Reading from the N-terminus, the 419-residue chain is Putative nucleobase-ascorbate transporter 9 (419 aa).

Residues 1 to 22 (MANGAGNGGGGAGGNGGGGNNG) show a composition bias toward gly residues. Residues 1–28 (MANGAGNGGGGAGGNGGGGNNGAGNRAE) are disordered. A run of 10 helical transmembrane segments spans residues 64–84 (LLSL…MGGG), 91–111 (VIQT…FFGT), 113–133 (LPVI…IIYS), 153–173 (IQGA…LGVW), 184–204 (SIAP…FPLV), 220–240 (GMML…SSGV), 273–293 (SFAM…LFYA), 313–333 (RVIQ…KFGA), 334–354 (FFAS…LCFV), and 370–390 (FNTK…PQYF).

It belongs to the nucleobase:cation symporter-2 (NCS2) (TC 2.A.40) family.

It is found in the membrane. The chain is Putative nucleobase-ascorbate transporter 9 (NAT9) from Arabidopsis thaliana (Mouse-ear cress).